The following is a 273-amino-acid chain: HTH-type transcriptional regulator NimR (273 aa).

The 101-residue stretch at 158-258 (PKIRTMVEMM…GQTPGRYIAR (101 aa)) folds into the HTH araC/xylS-type domain. DNA-binding regions (H-T-H motif) lie at residues 178–199 (GQWA…VKET) and 225–248 (VQKV…KKGL).

In terms of biological role, negatively regulates expression of the nimT operon and its own expression. Acts by binding to the nimR-nimT intergenic region. The chain is HTH-type transcriptional regulator NimR from Escherichia coli (strain K12).